Here is a 716-residue protein sequence, read N- to C-terminus: Penicillin-binding protein 2A (716 aa).

Residues 22-42 traverse the membrane as a helical segment; the sequence is LNILFLAAFVIFTWIIVELGI. The active-site Acyl-ester intermediate is the S397. The span at 689–706 shows a compositional bias: basic and acidic residues; that stretch reads SKQDKEGTQQKNKDKIEE. The segment at 689–716 is disordered; the sequence is SKQDKEGTQQKNKDKIEENAENTTSSDN.

This sequence belongs to the transpeptidase family.

It is found in the cell membrane. The protein resides in the forespore inner membrane. The catalysed reaction is Preferential cleavage: (Ac)2-L-Lys-D-Ala-|-D-Ala. Also transpeptidation of peptidyl-alanyl moieties that are N-acyl substituents of D-alanine.. The protein operates within cell wall biogenesis; peptidoglycan biosynthesis. Involved in the synthesis of peptidoglycan associated with cell wall elongation, especially following spore germination. Has a partially redundant function with PBP 1 (ponA) or PBP 4 (pbpD) during spore outgrowth. Plays a redundant role with PbpH in determining the rod shape of the cell during vegetative growth and spore outgrowth. The chain is Penicillin-binding protein 2A from Bacillus subtilis (strain 168).